We begin with the raw amino-acid sequence, 420 residues long: Gamma-glutamyl phosphate reductase (420 aa).

This sequence belongs to the gamma-glutamyl phosphate reductase family.

It is found in the cytoplasm. The enzyme catalyses L-glutamate 5-semialdehyde + phosphate + NADP(+) = L-glutamyl 5-phosphate + NADPH + H(+). It participates in amino-acid biosynthesis; L-proline biosynthesis; L-glutamate 5-semialdehyde from L-glutamate: step 2/2. Its function is as follows. Catalyzes the NADPH-dependent reduction of L-glutamate 5-phosphate into L-glutamate 5-semialdehyde and phosphate. The product spontaneously undergoes cyclization to form 1-pyrroline-5-carboxylate. This Neisseria meningitidis serogroup C (strain 053442) protein is Gamma-glutamyl phosphate reductase.